We begin with the raw amino-acid sequence, 538 residues long: Nicotinate phosphoribosyltransferase (538 aa).

Nicotinate-binding residues include Y21 and T210. A Phosphohistidine modification is found at H213. R318 contributes to the nicotinate binding site. 5-phospho-alpha-D-ribose 1-diphosphate is bound at residue T380.

This sequence belongs to the NAPRTase family. Homodimer. The cofactor is Mg(2+). Mn(2+) is required as a cofactor. Post-translationally, transiently phosphorylated on a His residue during the reaction cycle. Phosphorylation strongly increases the affinity for substrates and increases the rate of nicotinate D-ribonucleotide production. Dephosphorylation regenerates the low-affinity form of the enzyme, leading to product release.

It localises to the cytoplasm. It is found in the cytosol. The catalysed reaction is nicotinate + 5-phospho-alpha-D-ribose 1-diphosphate + ATP + H2O = nicotinate beta-D-ribonucleotide + ADP + phosphate + diphosphate. Its pathway is cofactor biosynthesis; NAD(+) biosynthesis; nicotinate D-ribonucleotide from nicotinate: step 1/1. Its function is as follows. Catalyzes the first step in the biosynthesis of NAD from nicotinic acid, the ATP-dependent synthesis of beta-nicotinate D-ribonucleotide from nicotinate and 5-phospho-D-ribose 1-phosphate. Helps prevent cellular oxidative stress via its role in NAD biosynthesis. This is Nicotinate phosphoribosyltransferase (NAPRT) from Bos taurus (Bovine).